The chain runs to 363 residues: Branched-chain-amino-acid aminotransferase 2 (363 aa).

Residue K197 is modified to N6-(pyridoxal phosphate)lysine.

This sequence belongs to the class-IV pyridoxal-phosphate-dependent aminotransferase family. It depends on pyridoxal 5'-phosphate as a cofactor.

It carries out the reaction L-leucine + 2-oxoglutarate = 4-methyl-2-oxopentanoate + L-glutamate. The enzyme catalyses L-isoleucine + 2-oxoglutarate = (S)-3-methyl-2-oxopentanoate + L-glutamate. The catalysed reaction is L-valine + 2-oxoglutarate = 3-methyl-2-oxobutanoate + L-glutamate. Its pathway is amino-acid biosynthesis; L-isoleucine biosynthesis; L-isoleucine from 2-oxobutanoate: step 4/4. The protein operates within amino-acid biosynthesis; L-leucine biosynthesis; L-leucine from 3-methyl-2-oxobutanoate: step 4/4. It functions in the pathway amino-acid biosynthesis; L-valine biosynthesis; L-valine from pyruvate: step 4/4. Its activity is regulated as follows. Inhibited by canaline. Its function is as follows. Transaminates branched-chain amino acids and ketoglutarate. The chain is Branched-chain-amino-acid aminotransferase 2 (ilvK) from Bacillus subtilis (strain 168).